The primary structure comprises 420 residues: Cell division protein FtsA (420 aa).

It belongs to the FtsA/MreB family. As to quaternary structure, self-interacts. Interacts with FtsZ.

It localises to the cell inner membrane. Functionally, cell division protein that is involved in the assembly of the Z ring. May serve as a membrane anchor for the Z ring. The polypeptide is Cell division protein FtsA (Escherichia coli O157:H7).